A 276-amino-acid polypeptide reads, in one-letter code: Probable NADH-ubiquinone oxidoreductase 30.4 kDa subunit, mitochondrial (276 aa).

The tract at residues 248 to 276 (EPVGEGKDFTPESFKLPTPQPEPEQEEKK) is disordered.

Belongs to the complex I 30 kDa subunit family. In terms of assembly, complex I is composed of about 30 different subunits. This is a component of the iron-sulfur protein fraction.

The protein localises to the mitochondrion inner membrane. The enzyme catalyses a ubiquinone + NADH + 5 H(+)(in) = a ubiquinol + NAD(+) + 4 H(+)(out). Core subunit of the mitochondrial membrane respiratory chain NADH dehydrogenase (Complex I) that is believed to belong to the minimal assembly required for catalysis. Complex I functions in the transfer of electrons from NADH to the respiratory chain. The immediate electron acceptor for the enzyme is believed to be ubiquinone. Essential for N-alkane assimilation. The polypeptide is Probable NADH-ubiquinone oxidoreductase 30.4 kDa subunit, mitochondrial (ALI1) (Candida maltosa (Yeast)).